The chain runs to 197 residues: MLSSLAPYMANPRQTLTQVLNFALVLSTAFMLWKGLSVVTNSTSPIVVVLSGSMEPAFQRGDLLFLWNRSPRVDVGEIVVYNVRGKDIPIVHRVMRSFPELPGREDKKSVKKGGEEGEETSSTPSQKLLTKGDNNMADDTELYAQGQEYLDRKEDIVGSVRGYVPGVGYVTILLSEHPWLRSVLLGFMGLMVVLQRE.

The Cytoplasmic portion of the chain corresponds to 1–14 (MLSSLAPYMANPRQ). A helical; Signal-anchor for type II membrane protein transmembrane segment spans residues 15–33 (TLTQVLNFALVLSTAFMLW). At 34–197 (KGLSVVTNST…MGLMVVLQRE (164 aa)) the chain is on the lumenal side. An N-linked (GlcNAc...) asparagine glycan is attached at Asn-41. Catalysis depends on charge relay system residues Ser-53 and His-92. Residues 102-115 (PGREDKKSVKKGGE) show a composition bias toward basic and acidic residues. The segment at 102–134 (PGREDKKSVKKGGEEGEETSSTPSQKLLTKGDN) is disordered. Asp-139 functions as the Charge relay system in the catalytic mechanism. A C-terminal short (CTS) helix region spans residues 183–194 (VLLGFMGLMVVL).

This sequence belongs to the peptidase S26B family. Component of the signal peptidase complex (SPC) composed of a catalytic subunit SEC11 and three accessory subunits SPC1, SPC2 and SPC3. The complex induces a local thinning of the ER membrane which is used to measure the length of the signal peptide (SP) h-region of protein substrates. This ensures the selectivity of the complex towards h-regions shorter than 18-20 amino acids. SPC associates with the translocon complex.

The protein localises to the endoplasmic reticulum membrane. It carries out the reaction Cleavage of hydrophobic, N-terminal signal or leader sequences from secreted and periplasmic proteins.. In terms of biological role, catalytic component of the signal peptidase complex (SPC) which catalyzes the cleavage of N-terminal signal sequences from nascent proteins as they are translocated into the lumen of the endoplasmic reticulum. Specifically cleaves N-terminal signal peptides that contain a hydrophobic alpha-helix (h-region) shorter than 18-20 amino acids. In Paracoccidioides lutzii (strain ATCC MYA-826 / Pb01) (Paracoccidioides brasiliensis), this protein is Signal peptidase complex catalytic subunit SEC11 (SEC11).